The sequence spans 313 residues: Protein-methionine-sulfoxide reductase catalytic subunit MsrP (313 aa).

Residues 1-44 (MARWRPDMAEREATPEALYLRRREFLALGAAGAVGLLVARGARA) constitute a signal peptide (tat-type signal). Mo-molybdopterin is bound by residues N76, 79-80 (YE), C134, T169, N217, R222, and 233-235 (GAK).

It belongs to the MsrP family. In terms of assembly, heterodimer of a catalytic subunit (MsrP) and a heme-binding subunit (MsrQ). Mo-molybdopterin serves as cofactor. In terms of processing, predicted to be exported by the Tat system. The position of the signal peptide cleavage has not been experimentally proven.

Its subcellular location is the periplasm. The catalysed reaction is L-methionyl-[protein] + a quinone + H2O = L-methionyl-(S)-S-oxide-[protein] + a quinol. The enzyme catalyses L-methionyl-[protein] + a quinone + H2O = L-methionyl-(R)-S-oxide-[protein] + a quinol. Its function is as follows. Part of the MsrPQ system that repairs oxidized periplasmic proteins containing methionine sulfoxide residues (Met-O), using respiratory chain electrons. Thus protects these proteins from oxidative-stress damage caused by reactive species of oxygen and chlorine generated by the host defense mechanisms. MsrPQ is essential for the maintenance of envelope integrity under bleach stress, rescuing a wide series of structurally unrelated periplasmic proteins from methionine oxidation. The catalytic subunit MsrP is non-stereospecific, being able to reduce both (R-) and (S-) diastereoisomers of methionine sulfoxide. In Anaeromyxobacter sp. (strain K), this protein is Protein-methionine-sulfoxide reductase catalytic subunit MsrP.